A 77-amino-acid polypeptide reads, in one-letter code: UPF0213 protein VNG_2274C (77 aa).

A GIY-YIG domain is found at 1–75 (MHHVYVIECS…KQLSRAQKEA (75 aa)).

Belongs to the UPF0213 family.

The protein is UPF0213 protein VNG_2274C of Halobacterium salinarum (strain ATCC 700922 / JCM 11081 / NRC-1) (Halobacterium halobium).